We begin with the raw amino-acid sequence, 1064 residues long: Lysine-specific demethylase 4A (1064 aa).

Alanine 2 is modified (N-acetylalanine). Residues 14-56 form the JmjN domain; it reads IMTFYPTMEEFRNFSRYIAYIESQGAHRAGLAKVVPPKEWKPR. Tyrosine 132 contributes to the 2-oxoglutarate binding site. In terms of domain architecture, JmjC spans 142–308; it reads EKHVDEWNIG…YGKQAVLCSC (167 aa). The Fe cation site is built by histidine 188 and glutamate 190. 2 residues coordinate 2-oxoglutarate: asparagine 198 and lysine 206. Zn(2+) contacts are provided by cysteine 234 and histidine 240. 2-oxoglutarate is bound at residue lysine 241. Residue histidine 276 coordinates Fe cation. Zn(2+) is bound by residues cysteine 306 and cysteine 308. Disordered stretches follow at residues 358–384, 501–537, and 616–642; these read ELPP…EEGD, FSGS…RAQG, and SDDE…PLSQ. Over residues 366–382 the composition is skewed to acidic residues; the sequence is EEECPEDDMEGVEDGEE. Residues 509 to 532 are compositionally biased toward low complexity; sequence SSSLGSGSSRDSVSSDSETSEPLS. Residue serine 523 is modified to Phosphoserine. Residues 597 to 638 form an interaction with NCOR1 region; the sequence is RQPLSKLPRHHPLVLQECVSDDETSEQLTPEEEAEETEAWAK. Over residues 616 to 634 the composition is skewed to acidic residues; it reads SDDETSEQLTPEEEAEETE. The PHD-type 1 zinc finger occupies 709–767; it reads MCFTSTGCGTDINLSTPYLEEDGTSILVSCKKCSVRVHASCYGVPPAKASEDWMCSRCS. The C2HC pre-PHD-type zinc-finger motif lies at 772–805; that stretch reads EEDCCLCSLRGGALQRANDDRWVHVSCAVAILEA. The PHD-type 2 zinc-finger motif lies at 828–885; it reads LKCIFCKKRRKRTAGCCVQCSHGRCPTAFHVSCAQAAGVMMQPDDWPFVVFITCFRHK. Tudor domains follow at residues 897–954 and 955–1011; these read QSIT…CLQF and GPPA…EELP.

This sequence belongs to the JHDM3 histone demethylase family. As to quaternary structure, interacts with histone deacetylase proteins HDAC1, HDAC2 and HDAC3. Interacts with RB and NCOR1. Interacts with VRK1. The cofactor is Fe(2+). In terms of processing, ubiquitinated by RNF8 and RNF168, leading to its degradation. Degradation promotes accessibility of H4K20me2 mark for DNA repair protein TP53BP1, which is then recruited. Also ubiquitinated by the SCF(FBXO22) complex; leading to proteasomal degradation.

The protein resides in the nucleus. The enzyme catalyses N(6),N(6),N(6)-trimethyl-L-lysyl(9)-[histone H3] + 2 2-oxoglutarate + 2 O2 = N(6)-methyl-L-lysyl(9)-[histone H3] + 2 formaldehyde + 2 succinate + 2 CO2. It catalyses the reaction N(6),N(6),N(6)-trimethyl-L-lysyl(36)-[histone H3] + 2 2-oxoglutarate + 2 O2 = N(6)-methyl-L-lysyl(36)-[histone H3] + 2 formaldehyde + 2 succinate + 2 CO2. Histone demethylase that specifically demethylates 'Lys-9' and 'Lys-36' residues of histone H3, thereby playing a central role in histone code. Does not demethylate histone H3 'Lys-4', H3 'Lys-27' nor H4 'Lys-20'. Demethylates trimethylated H3 'Lys-9' and H3 'Lys-36' residue, while it has no activity on mono- and dimethylated residues. Demethylation of Lys residue generates formaldehyde and succinate. Participates in transcriptional repression of ASCL2 and E2F-responsive promoters via the recruitment of histone deacetylases and NCOR1, respectively. The polypeptide is Lysine-specific demethylase 4A (KDM4A) (Pongo abelii (Sumatran orangutan)).